The following is an 815-amino-acid chain: RNA-binding protein 5 (815 aa).

Positions 1 to 93 (MGSDKRVSRT…EHDYRHDISD (93 aa)) are disordered. A phosphoserine mark is found at serine 18, serine 59, serine 69, serine 72, and serine 78. One can recognise an RRM 1 domain in the interval 98–178 (KTIMLRGLPI…KHIAMHYSNP (81 aa)). The RanBP2-type zinc finger occupies 181-210 (KFEDWLCNKCCLNNFRKRLKCFRCGADKFD). The 85-residue stretch at 231–315 (DTIILRNIAP…KTIGVDFAKS (85 aa)) folds into the RRM 2 domain. Positions 321–809 (VLSDGNRVSA…KDAVRKAMFA (489 aa)) are required for interaction with U2AF2. The segment covering 411–422 (QSPQLYNQTSNP) has biased composition (polar residues). Disordered regions lie at residues 411–468 (QSPQ…DESS) and 507–540 (PAAESSSHQQSGLPPAKEGKEKKEKPKSKTAQQI). The span at 426–446 (PTEEAQPSTSTSTQAPAASPT) shows a compositional bias: low complexity. A Phosphoserine modification is found at serine 444. A sufficient for interaction with ACIN1, PRPF8, SFRS3, SNRPB, SNRPN, SNRNP70 and SNRNP200 region spans residues 452–535 (TKYAVPDTST…KEKKEKPKSK (84 aa)). Phosphoserine is present on residues serine 621 and serine 624. The C2H2-type; atypical zinc finger occupies 647–677 (MACLLCRRQFPNKDALVRHQQLSDLHKQNMD). The region spanning 743–789 (HSNIGNKMLQAMGWREGSGLGRKCQGITAPIEAQVRLKGAGLGAKGS) is the G-patch domain.

The protein belongs to the RBM5/RBM10 family. As to quaternary structure, component of the spliceosome A complex (also known as the prespliceosome). Appears to dissociate from the spliceosome upon formation of the spliceosome B complex (also known as the precatalytic spliceosome), in which the heterotrimeric U4/U6.U5 snRNPs are bound. Interacts with U2AF2; this interaction is direct. Also interacts with ACIN1, PRPF8, SFRS3, SNRPB, SNRPN, SNRNP70 and SNRNP200; these interactions may be indirect. As to expression, isoform 5 is widely expressed in normal tissues and is expressed at increased levels in T-leukemic cell lines.

It is found in the nucleus. Functionally, component of the spliceosome A complex. Binds to ssRNA containing the consensus sequence 5'-AGGUAA-3'. Regulates alternative splicing of a number of mRNAs. May modulate splice site pairing after recruitment of the U1 and U2 snRNPs to the 5' and 3' splice sites of the intron. May both positively and negatively regulate apoptosis by regulating the alternative splicing of several genes involved in this process, including FAS and CASP2/caspase-2. In the case of FAS, promotes exclusion of exon 6 thereby producing a soluble form of FAS that inhibits apoptosis. In the case of CASP2/caspase-2, promotes exclusion of exon 9 thereby producing a catalytically active form of CASP2/Caspase-2 that induces apoptosis. This is RNA-binding protein 5 (RBM5) from Homo sapiens (Human).